A 273-amino-acid polypeptide reads, in one-letter code: Large ribosomal subunit protein uL2 (273 aa).

2 disordered regions span residues 28–53 (KPFA…TTRH) and 221–273 (RGTA…RRSK). Residues 39–48 (KSGGRNNNGR) show a composition bias toward low complexity.

This sequence belongs to the universal ribosomal protein uL2 family. Part of the 50S ribosomal subunit. Forms a bridge to the 30S subunit in the 70S ribosome.

One of the primary rRNA binding proteins. Required for association of the 30S and 50S subunits to form the 70S ribosome, for tRNA binding and peptide bond formation. It has been suggested to have peptidyltransferase activity; this is somewhat controversial. Makes several contacts with the 16S rRNA in the 70S ribosome. The protein is Large ribosomal subunit protein uL2 of Salmonella agona (strain SL483).